Consider the following 110-residue polypeptide: NADH-quinone oxidoreductase subunit K (110 aa).

Transmembrane regions (helical) follow at residues L13–M33, I41–I61, and I73–Y93.

It belongs to the complex I subunit 4L family. As to quaternary structure, NDH-1 is composed of 14 different subunits. Subunits NuoA, H, J, K, L, M, N constitute the membrane sector of the complex.

The protein localises to the cell inner membrane. It carries out the reaction a quinone + NADH + 5 H(+)(in) = a quinol + NAD(+) + 4 H(+)(out). Functionally, NDH-1 shuttles electrons from NADH, via FMN and iron-sulfur (Fe-S) centers, to quinones in the respiratory chain. The immediate electron acceptor for the enzyme in this species is believed to be ubiquinone. Couples the redox reaction to proton translocation (for every two electrons transferred, four hydrogen ions are translocated across the cytoplasmic membrane), and thus conserves the redox energy in a proton gradient. This is NADH-quinone oxidoreductase subunit K from Rickettsia felis (strain ATCC VR-1525 / URRWXCal2) (Rickettsia azadi).